Here is a 595-residue protein sequence, read N- to C-terminus: DNA mismatch repair protein MutL (595 aa).

The protein belongs to the DNA mismatch repair MutL/HexB family.

Functionally, this protein is involved in the repair of mismatches in DNA. It is required for dam-dependent methyl-directed DNA mismatch repair. May act as a 'molecular matchmaker', a protein that promotes the formation of a stable complex between two or more DNA-binding proteins in an ATP-dependent manner without itself being part of a final effector complex. In Rhodopseudomonas palustris (strain ATCC BAA-98 / CGA009), this protein is DNA mismatch repair protein MutL.